A 191-amino-acid chain; its full sequence is Ciliary microtubule-associated protein 3 (191 aa).

Interacts with proteins involved in ciliary transport, including ARL13B, CETN1, KIF3A, RAB6A, RAB8A, TUBB1 and TUBG1. Interacts with AURKA.

The protein resides in the cytoplasmic vesicle. It is found in the golgi apparatus. Its subcellular location is the trans-Golgi network. It localises to the cytoplasm. In terms of biological role, during primary cilia disassembly, involved in cilia disassembly. Required specifically to control cilia retraction as well as the liberation and duplication of the basal body/centrosome. May act by stimulating AURKA activity at the basal body in a cell cycle-dependent manner. The polypeptide is Ciliary microtubule-associated protein 3 (Homo sapiens (Human)).